The primary structure comprises 487 residues: Acetyl-coenzyme A carboxylase carboxyl transferase subunit beta, chloroplastic (487 aa).

The tract at residues 180–201 (SRNSSENEGSSKRTRTKGSDLT) is disordered. Positions 218-487 (LWVQCENCYG…PLNQKSSKIK (270 aa)) constitute a CoA carboxyltransferase N-terminal domain. 4 residues coordinate Zn(2+): cysteine 222, cysteine 225, cysteine 241, and cysteine 244. A C4-type zinc finger spans residues 222 to 244 (CENCYGLNYKKFLKSKMNICEQC).

This sequence belongs to the AccD/PCCB family. As to quaternary structure, acetyl-CoA carboxylase is a heterohexamer composed of biotin carboxyl carrier protein, biotin carboxylase and 2 subunits each of ACCase subunit alpha and ACCase plastid-coded subunit beta (accD). The cofactor is Zn(2+).

It is found in the plastid. The protein resides in the chloroplast stroma. It catalyses the reaction N(6)-carboxybiotinyl-L-lysyl-[protein] + acetyl-CoA = N(6)-biotinyl-L-lysyl-[protein] + malonyl-CoA. The protein operates within lipid metabolism; malonyl-CoA biosynthesis; malonyl-CoA from acetyl-CoA: step 1/1. Functionally, component of the acetyl coenzyme A carboxylase (ACC) complex. Biotin carboxylase (BC) catalyzes the carboxylation of biotin on its carrier protein (BCCP) and then the CO(2) group is transferred by the transcarboxylase to acetyl-CoA to form malonyl-CoA. The protein is Acetyl-coenzyme A carboxylase carboxyl transferase subunit beta, chloroplastic of Atropa belladonna (Belladonna).